Here is a 335-residue protein sequence, read N- to C-terminus: Putative D-threonate 4-phosphate dehydrogenase (335 aa).

Substrate contacts are provided by His-140 and Thr-141. Residues His-170, His-214, and His-269 each contribute to the a divalent metal cation site. The substrate site is built by Lys-277 and Arg-295.

It belongs to the PdxA family. PdxA2 subfamily. Homodimer. A divalent metal cation is required as a cofactor.

It carries out the reaction 4-O-phospho-D-threonate + NAD(+) = dihydroxyacetone phosphate + CO2 + NADH. Functionally, catalyzes the NAD-dependent oxidation and subsequent decarboxylation of D-threonate 4-phosphate to produce dihydroxyacetone phosphate (DHAP). This Symbiobacterium thermophilum (strain DSM 24528 / JCM 14929 / IAM 14863 / T) protein is Putative D-threonate 4-phosphate dehydrogenase.